A 411-amino-acid chain; its full sequence is Mannan endo-1,4-beta-mannosidase 1 (411 aa).

A signal peptide spans 1-17; the sequence is MLNILPFFLFFLPFLIG. Residue N33 is glycosylated (N-linked (GlcNAc...) asparagine). Substrate-binding residues include W87 and N197. Catalysis depends on E198, which acts as the Proton donor. N202 carries N-linked (GlcNAc...) asparagine glycosylation. Y277 contributes to the substrate binding site. The active-site Nucleophile is the E319. Residue W361 participates in substrate binding. N366 and N384 each carry an N-linked (GlcNAc...) asparagine glycan.

It belongs to the glycosyl hydrolase 5 (cellulase A) family. Expressed in roots, stems and flowers.

It is found in the secreted. It catalyses the reaction Random hydrolysis of (1-&gt;4)-beta-D-mannosidic linkages in mannans, galactomannans and glucomannans.. The chain is Mannan endo-1,4-beta-mannosidase 1 (MAN1) from Arabidopsis thaliana (Mouse-ear cress).